Consider the following 308-residue polypeptide: Endonuclease G, mitochondrial (308 aa).

Histidine 148 acts as the Proton acceptor in catalysis. Asparagine 180 is a Mg(2+) binding site.

Belongs to the DNA/RNA non-specific endonuclease family. As to quaternary structure, homodimer; disulfide-linked. Interacts with crn-5, crn-4, crn-1 and cyn-13. Mg(2+) is required as a cofactor.

It is found in the mitochondrion. Endonuclease important for programmed cell death; it mediates apoptotic DNA fragmentation. This is Endonuclease G, mitochondrial (cps-6) from Caenorhabditis elegans.